Here is a 221-residue protein sequence, read N- to C-terminus: 2-phospho-L-lactate guanylyltransferase (221 aa).

Belongs to the CofC family. In terms of assembly, homodimer.

The enzyme catalyses (2S)-2-phospholactate + GTP + H(+) = (2S)-lactyl-2-diphospho-5'-guanosine + diphosphate. The protein operates within cofactor biosynthesis; coenzyme F420 biosynthesis. Its function is as follows. Guanylyltransferase that catalyzes the activation of (2S)-2-phospholactate (2-PL) as (2S)-lactyl-2-diphospho-5'-guanosine, via the condensation of 2-PL with GTP. It is involved in the biosynthesis of coenzyme F420, a hydride carrier cofactor. The sequence is that of 2-phospho-L-lactate guanylyltransferase from Methanothrix thermoacetophila (strain DSM 6194 / JCM 14653 / NBRC 101360 / PT) (Methanosaeta thermophila).